Here is a 293-residue protein sequence, read N- to C-terminus: 4-hydroxy-tetrahydrodipicolinate synthase (293 aa).

Pyruvate is bound at residue Thr47. Tyr135 functions as the Proton donor/acceptor in the catalytic mechanism. Residue Lys163 is the Schiff-base intermediate with substrate of the active site. Ile204 is a binding site for pyruvate.

It belongs to the DapA family. Homotetramer; dimer of dimers.

It is found in the cytoplasm. It catalyses the reaction L-aspartate 4-semialdehyde + pyruvate = (2S,4S)-4-hydroxy-2,3,4,5-tetrahydrodipicolinate + H2O + H(+). The protein operates within amino-acid biosynthesis; L-lysine biosynthesis via DAP pathway; (S)-tetrahydrodipicolinate from L-aspartate: step 3/4. Its function is as follows. Catalyzes the condensation of (S)-aspartate-beta-semialdehyde [(S)-ASA] and pyruvate to 4-hydroxy-tetrahydrodipicolinate (HTPA). This chain is 4-hydroxy-tetrahydrodipicolinate synthase, found in Brachyspira hyodysenteriae (strain ATCC 49526 / WA1).